Here is a 185-residue protein sequence, read N- to C-terminus: Ribosome-recycling factor (185 aa).

The tract at residues 137-158 (DELKKLEKDHTASEDEVKRAQD) is disordered.

It belongs to the RRF family.

The protein localises to the cytoplasm. Its function is as follows. Responsible for the release of ribosomes from messenger RNA at the termination of protein biosynthesis. May increase the efficiency of translation by recycling ribosomes from one round of translation to another. This is Ribosome-recycling factor from Desulfitobacterium hafniense (strain Y51).